The following is a 259-amino-acid chain: Hydroxyethylthiazole kinase (259 aa).

Met37 is a binding site for substrate. The ATP site is built by Arg113 and Thr158. Gly185 contributes to the substrate binding site.

The protein belongs to the Thz kinase family. The cofactor is Mg(2+).

It catalyses the reaction 5-(2-hydroxyethyl)-4-methylthiazole + ATP = 4-methyl-5-(2-phosphooxyethyl)-thiazole + ADP + H(+). Its pathway is cofactor biosynthesis; thiamine diphosphate biosynthesis; 4-methyl-5-(2-phosphoethyl)-thiazole from 5-(2-hydroxyethyl)-4-methylthiazole: step 1/1. In terms of biological role, catalyzes the phosphorylation of the hydroxyl group of 4-methyl-5-beta-hydroxyethylthiazole (THZ). This Helicobacter pylori (strain ATCC 700392 / 26695) (Campylobacter pylori) protein is Hydroxyethylthiazole kinase.